The following is a 328-amino-acid chain: Putative UDP-N-acetylglucosamine--dolichyl-phosphate N-acetylglucosaminephosphotransferase (328 aa).

The next 9 membrane-spanning stretches (helical) occupy residues 1 to 21, 48 to 68, 78 to 98, 107 to 127, 129 to 149, 166 to 186, 192 to 212, 228 to 248, and 301 to 321; these read MLVS…VTLI, VPVL…FTFL, IENV…LGLL, ATRA…SVGH, IISI…IIIL, LNGL…YIGL, SFYA…FLIF, FIGS…ALFF, and YHIV…AVVF.

Belongs to the glycosyltransferase 4 family.

The protein localises to the cell membrane. It carries out the reaction a di-trans,poly-cis-dolichyl phosphate + UDP-N-acetyl-alpha-D-glucosamine = an N-acetyl-alpha-D-glucosaminyl-diphospho-di-trans,poly-cis-dolichol + UMP. Its activity is regulated as follows. Inhibited by tunicamycin. The sequence is that of Putative UDP-N-acetylglucosamine--dolichyl-phosphate N-acetylglucosaminephosphotransferase (gnpTA) from Sulfolobus acidocaldarius (strain ATCC 33909 / DSM 639 / JCM 8929 / NBRC 15157 / NCIMB 11770).